Consider the following 705-residue polypeptide: Voltage-dependent calcium channel beta subunit-associated regulatory protein (705 aa).

The Extracellular segment spans residues 1 to 45; sequence MQPTATMATAATTTTTTTATVALTTSWDNATGRPTAEPDPILDNY. N-linked (GlcNAc...) asparagine glycosylation is present at N29. The chain crosses the membrane as a helical; Signal-anchor for type III membrane protein span at residues 46–66; the sequence is VLLVVVMSLFVGGTLVVLSGV. The Cytoplasmic segment spans residues 67-705; the sequence is LLLCKRCWDV…APTSPDHSPA (639 aa). 2 disordered regions span residues 91 to 113 and 212 to 284; these read TTTYLDNGTHPAQDPDFRGEDPE and GKAL…GSGA. Positions 245–254 are enriched in polar residues; sequence PSASSDSGEG. Residues 267-284 are compositionally biased toward gly residues; that stretch reads GGPGAAAGPGEAGPGSGA. Residues S299 and S304 each carry the phosphoserine modification. Disordered stretches follow at residues 316-353, 369-436, 448-540, and 559-655; these read PSQRAASLDTRGSPKRHHFQRQRAASESTEQEEGDAPQ, FPHP…SYRD, AAAS…RRDY, and HFDD…CPGS. Acidic residues predominate over residues 344–353; that stretch reads TEQEEGDAPQ. The span at 371 to 382 shows a compositional bias: pro residues; the sequence is HPRPFLASPPPA. Positions 383 to 397 are enriched in low complexity; the sequence is LGRLEAAEAAGGASP. The segment covering 479–488 has biased composition (pro residues); the sequence is AFPPPSPPAP. A compositionally biased stretch (basic and acidic residues) spans 489–499; the sequence is RPKDGEARRLL. Phosphoserine is present on residues S507 and S528. The segment covering 567–585 has biased composition (basic residues); that stretch reads ARHRARAHPHARKQWQRGR. Residues 591–614 show a composition bias toward low complexity; sequence GARAAPALAGTPAPPAGAARPARA. S621 bears the Phosphoserine mark. T698 carries the post-translational modification Phosphothreonine. A phosphoserine mark is found at S699 and S703.

In terms of assembly, interacts with voltage-dependent calcium channels CACNB1, CACNB2, CACNB3 and CACNB4 beta subunits; prevents their interaction with the CACNA1C alpha subunit thereby negatively regulating the activity of the corresponding calcium channels.

It is found in the cytoplasmic vesicle. Its subcellular location is the secretory vesicle. It localises to the synaptic vesicle membrane. The protein localises to the cell membrane. The protein resides in the cell projection. It is found in the growth cone. Its function is as follows. Negatively regulates voltage-gated calcium channels by preventing the interaction between their alpha and beta subunits. Thereby, negatively regulates calcium channels activity at the plasma membrane and indirectly inhibits calcium-regulated exocytosis. In Homo sapiens (Human), this protein is Voltage-dependent calcium channel beta subunit-associated regulatory protein.